Here is a 145-residue protein sequence, read N- to C-terminus: Small ribosomal subunit protein bS16 (145 aa).

The segment at 82-145 (IKERAATNNP…EAAAEEQTEA (64 aa)) is disordered. Positions 95-115 (EPGKKAKERAEERAEKAREAA) are enriched in basic and acidic residues. Low complexity predominate over residues 116–137 (EAAAAAAAAPAEEAAAEAPAEA).

Belongs to the bacterial ribosomal protein bS16 family.

The polypeptide is Small ribosomal subunit protein bS16 (Novosphingobium aromaticivorans (strain ATCC 700278 / DSM 12444 / CCUG 56034 / CIP 105152 / NBRC 16084 / F199)).